Here is a 446-residue protein sequence, read N- to C-terminus: tRNA-2-methylthio-N(6)-dimethylallyladenosine synthase (446 aa).

Positions 2–122 constitute an MTTase N-terminal domain; sequence KKAYVKSYGC…LPDLLRQSRE (121 aa). [4Fe-4S] cluster contacts are provided by Cys11, Cys47, Cys85, Cys157, Cys161, and Cys164. In terms of domain architecture, Radical SAM core spans 143–375; the sequence is RNRGVTGFLT…QDLLDRQRHA (233 aa). The TRAM domain occupies 378–440; it reads AASVGTLTEI…SNSLFGEALE (63 aa).

The protein belongs to the methylthiotransferase family. MiaB subfamily. Monomer. Requires [4Fe-4S] cluster as cofactor.

The protein localises to the cytoplasm. The catalysed reaction is N(6)-dimethylallyladenosine(37) in tRNA + (sulfur carrier)-SH + AH2 + 2 S-adenosyl-L-methionine = 2-methylsulfanyl-N(6)-dimethylallyladenosine(37) in tRNA + (sulfur carrier)-H + 5'-deoxyadenosine + L-methionine + A + S-adenosyl-L-homocysteine + 2 H(+). Its function is as follows. Catalyzes the methylthiolation of N6-(dimethylallyl)adenosine (i(6)A), leading to the formation of 2-methylthio-N6-(dimethylallyl)adenosine (ms(2)i(6)A) at position 37 in tRNAs that read codons beginning with uridine. This Methylorubrum extorquens (strain CM4 / NCIMB 13688) (Methylobacterium extorquens) protein is tRNA-2-methylthio-N(6)-dimethylallyladenosine synthase.